The chain runs to 139 residues: MPIHLEIVTAERVILSDDVDMISVPTKDGRVGILPRHAPLMTILEPGELDIIKNGERTPFAVSGGFMEVLPHRVTILADTVERADEIDEARAEQARAEAEARRREAQSEHDMALAEAKLRKEMVRLRVAQLHKIKRRQS.

Residues 89–110 (EARAEQARAEAEARRREAQSEH) form a disordered region.

It belongs to the ATPase epsilon chain family. F-type ATPases have 2 components, CF(1) - the catalytic core - and CF(0) - the membrane proton channel. CF(1) has five subunits: alpha(3), beta(3), gamma(1), delta(1), epsilon(1). CF(0) has three main subunits: a, b and c.

The protein localises to the cell membrane. Produces ATP from ADP in the presence of a proton gradient across the membrane. The polypeptide is ATP synthase epsilon chain (Chloroflexus aggregans (strain MD-66 / DSM 9485)).